Reading from the N-terminus, the 338-residue chain is Glycerol-3-phosphate dehydrogenase [NAD(P)+] (338 aa).

Residues serine 13, tryptophan 14, and lysine 108 each contribute to the NADPH site. Sn-glycerol 3-phosphate contacts are provided by lysine 108, glycine 139, and serine 141. Alanine 143 serves as a coordination point for NADPH. Sn-glycerol 3-phosphate contacts are provided by lysine 194, aspartate 247, serine 257, arginine 258, and asparagine 259. Lysine 194 serves as the catalytic Proton acceptor. Arginine 258 contacts NADPH. 2 residues coordinate NADPH: valine 282 and glutamate 284.

Belongs to the NAD-dependent glycerol-3-phosphate dehydrogenase family.

The protein resides in the cytoplasm. It catalyses the reaction sn-glycerol 3-phosphate + NAD(+) = dihydroxyacetone phosphate + NADH + H(+). The enzyme catalyses sn-glycerol 3-phosphate + NADP(+) = dihydroxyacetone phosphate + NADPH + H(+). Its pathway is membrane lipid metabolism; glycerophospholipid metabolism. Its function is as follows. Catalyzes the reduction of the glycolytic intermediate dihydroxyacetone phosphate (DHAP) to sn-glycerol 3-phosphate (G3P), the key precursor for phospholipid synthesis. This chain is Glycerol-3-phosphate dehydrogenase [NAD(P)+], found in Streptococcus pneumoniae (strain JJA).